Reading from the N-terminus, the 215-residue chain is Nascent polypeptide-associated complex subunit alpha (215 aa).

The interval 1–81 is disordered; the sequence is MPGEATETVP…SEKKARKAMS (81 aa). The span at 9–21 shows a compositional bias: polar residues; that stretch reads VPVTEQEMQQPQV. Residues 29–42 are compositionally biased toward acidic residues; the sequence is SDSDDSVPELEEQD. A compositionally biased stretch (low complexity) spans 43–57; sequence SAQTQTQQAQLAAAA. Residues 70–135 enclose the NAC-A/B domain; the sequence is SRSEKKARKA…AKIEDLSQQA (66 aa). The 38-residue stretch at 176-213 folds into the UBA domain; the sequence is VEVKDIELVMSQANVSRAKAVRALKNNNNDIVNAIMEL.

The protein belongs to the NAC-alpha family.

May promote appropriate targeting of ribosome-nascent polypeptide complexes. The protein is Nascent polypeptide-associated complex subunit alpha (naca) of Oreochromis niloticus (Nile tilapia).